Consider the following 296-residue polypeptide: Small ribosomal subunit protein uS2 (296 aa).

Positions Ala274–Ala284 are enriched in low complexity. The segment at Ala274–Trp296 is disordered.

It belongs to the universal ribosomal protein uS2 family. As to quaternary structure, component of the small ribosomal subunit. Mature ribosomes consist of a small (40S) and a large (60S) subunit. The 40S subunit contains about 33 different proteins and 1 molecule of RNA (18S). The 60S subunit contains about 49 different proteins and 3 molecules of RNA (25S, 5.8S and 5S). Interacts with RPS21.

It localises to the cytoplasm. Its function is as follows. Required for the assembly and/or stability of the 40S ribosomal subunit. Required for the processing of the 20S rRNA-precursor to mature 18S rRNA in a late step of the maturation of 40S ribosomal subunits. The protein is Small ribosomal subunit protein uS2 of Ajellomyces capsulatus (strain G186AR / H82 / ATCC MYA-2454 / RMSCC 2432) (Darling's disease fungus).